The sequence spans 337 residues: Neurogenic differentiation factor 6 (337 aa).

Positions 43–82 (LRGKSIKRAPGEETEKEEEEEDREEEDENGLPRRRGLRKK) are disordered. Residues 54-71 (EETEKEEEEEDREEEDEN) are compositionally biased toward acidic residues. Positions 80–86 (RKKKTTK) match the Nuclear localization signal motif. The bHLH domain occupies 94 to 146 (FRRQEANARERNRMHGLNDALDNLRKVVPCYSKTQKLSKIETLRLAKNYIWAL).

Efficient DNA binding requires dimerization with another bHLH protein.

It is found in the nucleus. Its function is as follows. Activates E box-dependent transcription in collaboration with TCF3/E47. May be a trans-acting factor involved in the development and maintenance of the mammalian nervous system. Transactivates the promoter of its own gene. The protein is Neurogenic differentiation factor 6 (NEUROD6) of Homo sapiens (Human).